The primary structure comprises 876 residues: GRB2-associated and regulator of MAPK protein (876 aa).

The interval 9–318 (KDVKWSSASF…NLIKGEVWQD (310 aa)) is CABIT. Y451 is subject to Phosphotyrosine. Disordered regions lie at residues 460-569 (SVKR…TLSY) and 708-741 (DRML…LSEP). Over residues 461–471 (VKRSGQPLTRS) the composition is skewed to polar residues. Positions 532–549 (PPVPPRSSKPSSPTPSVP) are enriched in pro residues. Residues 556 to 569 (VRQQTRSPSPTLSY) show a composition bias toward polar residues. The region spanning 811–876 (LSVEEVSKSL…QFINGWRPKM (66 aa)) is the SAM domain.

This sequence belongs to the GAREM family.

In terms of biological role, adapter protein that may provide a link between cell surface epidermal growth factor receptor and the MAPK/ERK signaling pathway. May promote cell proliferation. The sequence is that of GRB2-associated and regulator of MAPK protein (garem1) from Xenopus laevis (African clawed frog).